The following is a 235-amino-acid chain: Phosphoribosylaminoimidazole-succinocarboxamide synthase (235 aa).

The protein belongs to the SAICAR synthetase family.

It carries out the reaction 5-amino-1-(5-phospho-D-ribosyl)imidazole-4-carboxylate + L-aspartate + ATP = (2S)-2-[5-amino-1-(5-phospho-beta-D-ribosyl)imidazole-4-carboxamido]succinate + ADP + phosphate + 2 H(+). It functions in the pathway purine metabolism; IMP biosynthesis via de novo pathway; 5-amino-1-(5-phospho-D-ribosyl)imidazole-4-carboxamide from 5-amino-1-(5-phospho-D-ribosyl)imidazole-4-carboxylate: step 1/2. This Exiguobacterium sibiricum (strain DSM 17290 / CCUG 55495 / CIP 109462 / JCM 13490 / 255-15) protein is Phosphoribosylaminoimidazole-succinocarboxamide synthase.